The chain runs to 345 residues: tRNA N6-adenosine threonylcarbamoyltransferase (345 aa).

Fe cation-binding residues include His-111 and His-115. Substrate is bound by residues 136 to 140 (LVSGG), Asp-169, Gly-182, and Asn-279. Asp-307 is a binding site for Fe cation.

The protein belongs to the KAE1 / TsaD family. It depends on Fe(2+) as a cofactor.

It localises to the cytoplasm. The enzyme catalyses L-threonylcarbamoyladenylate + adenosine(37) in tRNA = N(6)-L-threonylcarbamoyladenosine(37) in tRNA + AMP + H(+). Required for the formation of a threonylcarbamoyl group on adenosine at position 37 (t(6)A37) in tRNAs that read codons beginning with adenine. Is involved in the transfer of the threonylcarbamoyl moiety of threonylcarbamoyl-AMP (TC-AMP) to the N6 group of A37, together with TsaE and TsaB. TsaD likely plays a direct catalytic role in this reaction. The sequence is that of tRNA N6-adenosine threonylcarbamoyltransferase from Actinobacillus succinogenes (strain ATCC 55618 / DSM 22257 / CCUG 43843 / 130Z).